A 29-amino-acid chain; its full sequence is Brevinin-2Rc (29 aa).

An intrachain disulfide couples Cys23 to Cys29.

As to expression, expressed by the skin glands.

The protein localises to the secreted. Its function is as follows. Antimicrobial peptide. This Pelophylax ridibundus (Marsh frog) protein is Brevinin-2Rc.